Here is a 631-residue protein sequence, read N- to C-terminus: tRNA uridine 5-carboxymethylaminomethyl modification enzyme MnmG (631 aa).

Residue 14–19 coordinates FAD; it reads GGGHAG. NAD(+) is bound at residue 274–288; sequence GPRYCPSIEDKIHRF.

The protein belongs to the MnmG family. In terms of assembly, homodimer. Heterotetramer of two MnmE and two MnmG subunits. FAD is required as a cofactor.

It is found in the cytoplasm. NAD-binding protein involved in the addition of a carboxymethylaminomethyl (cmnm) group at the wobble position (U34) of certain tRNAs, forming tRNA-cmnm(5)s(2)U34. The polypeptide is tRNA uridine 5-carboxymethylaminomethyl modification enzyme MnmG (Pseudomonas paraeruginosa (strain DSM 24068 / PA7) (Pseudomonas aeruginosa (strain PA7))).